Consider the following 189-residue polypeptide: GTPase KRas (189 aa).

Methionine 1 carries the post-translational modification N-acetylmethionine. The residue at position 2 (threonine 2) is an N-acetylthreonine; in GTPase KRas, N-terminally processed. GTP contacts are provided by residues 10–18, 29–35, and 59–60; these read GAGGVGKSA, VDEYDPT, and AG. Positions 32-40 match the Effector region motif; it reads YDPTIEDSY. Lysine 104 is subject to N6-acetyllysine. Position 116-119 (116-119) interacts with GTP; that stretch reads NKCD. Residues 166–185 form a hypervariable region region; sequence YRLKKISKEEKTPGCVKIKK. Lysine 170 is covalently cross-linked (Glycyl lysine isopeptide (Lys-Gly) (interchain with G-Cter in ubiquitin)). A lipid anchor (S-palmitoyl cysteine) is attached at cysteine 180. Residues lysine 182, lysine 184, and lysine 185 are each lipidated (N6-palmitoyl lysine). Residue cysteine 186 is modified to Cysteine methyl ester. Cysteine 186 carries S-farnesyl cysteine lipidation. Residues 187-189 constitute a propeptide, removed in mature form; sequence VIM.

Belongs to the small GTPase superfamily. Ras family. In terms of assembly, interacts with PHLPP. Interacts (active GTP-bound form preferentially) with RGS14. Interacts (when farnesylated) with PDE6D; this promotes dissociation from the cell membrane. Interacts with SOS1. Interacts (when farnesylated) with GPR31. Interacts with RAP1GDS1. Interacts (active GTP-bound form) with both SHOC2 and PP1c (all isoforms) to form a tertiary complex; SHOC2 and PP1c preferably bind M-Ras/MRAS, but they also bind K-Ras/KRAS, N-Ras/NRAS and H-Ras/HRAS. Interacts (GTP-bound form) with MAPKAP1/SIN1; inhibiting K-Ras/KRAS activity. As to quaternary structure, interacts (when farnesylated) with GPR31. In terms of processing, acetylation at Lys-104 prevents interaction with guanine nucleotide exchange factors (GEFs). Post-translationally, ubiquitinated by the BCR(LZTR1) E3 ubiquitin ligase complex at Lys-170 in a non-degradative manner, leading to inhibit Ras signaling by decreasing Ras association with membranes. Palmitoylated at Lys-182, Lys-184 and Lys-185. Lysine-depalmitoylation by SIRT2 promotes its localization to endomembranes in endocytic pathways.

The protein localises to the cell membrane. It localises to the endomembrane system. The protein resides in the cytoplasm. It is found in the cytosol. It carries out the reaction GTP + H2O = GDP + phosphate + H(+). Its activity is regulated as follows. Alternates between an inactive form bound to GDP and an active form bound to GTP. Activated by a guanine nucleotide-exchange factor (GEF) and inactivated by a GTPase-activating protein (GAP). Interaction with SOS1 promotes exchange of bound GDP to GTP. Its function is as follows. Ras proteins bind GDP/GTP and possess intrinsic GTPase activity. Plays an important role in the regulation of cell proliferation. Plays a role in promoting oncogenic events by inducing transcriptional silencing of tumor suppressor genes (TSGs) in colorectal cancer (CRC) cells in a ZNF304-dependent manner. This Rattus norvegicus (Rat) protein is GTPase KRas (Kras).